We begin with the raw amino-acid sequence, 199 residues long: Early nodulin-like protein 3 (199 aa).

A signal peptide spans 1-23 (MGLVMRFDLYLMFVMLMGLGFTI). The Phytocyanin domain occupies 27-128 (YKFYVGGKDG…GQKLAVKVLS (102 aa)). N-linked (GlcNAc...) asparagine glycosylation is found at Asn-57 and Asn-83. Cys-82 and Cys-116 are oxidised to a cystine. The tract at residues 130–180 (VHHSHSPRHTSPSPSPVHQELSSPGPSPGVEPSSDSNSRVPAPGPATAPNS) is disordered. The segment covering 138 to 165 (HTSPSPSPVHQELSSPGPSPGVEPSSDS) has biased composition (low complexity). Asn-179 carries GPI-anchor amidated asparagine lipidation. The propeptide at 180–199 (SAGLVGPGMVVLVIMISSLF) is removed in mature form.

The protein belongs to the early nodulin-like (ENODL) family. In terms of tissue distribution, confined to flowers.

It is found in the cell membrane. May act as a carbohydrate transporter. This chain is Early nodulin-like protein 3, found in Arabidopsis thaliana (Mouse-ear cress).